The chain runs to 449 residues: 8-oxoguanine deaminase (449 aa).

His-64 and His-66 together coordinate Zn(2+). Gln-69 lines the substrate pocket. Position 232 (His-232) interacts with Zn(2+). Substrate contacts are provided by Glu-235 and His-269. Zn(2+) contacts are provided by His-269 and Asp-320.

It belongs to the metallo-dependent hydrolases superfamily. ATZ/TRZ family. Homodimer. It depends on Zn(2+) as a cofactor.

It carries out the reaction 8-oxoguanine + H2O + H(+) = urate + NH4(+). It participates in purine metabolism. Its function is as follows. Specifically deaminates 8-Oxoguanine (8-oxoG) to uric acid. 8-oxoG is formed via the oxidation of guanine within DNA by reactive oxygen species and leads, if uncorrected, to the incorporation of 8-oxoG:A mismatches and eventually to G:C to T:A transversions. The polypeptide is 8-oxoguanine deaminase (Pseudomonas aeruginosa (strain ATCC 15692 / DSM 22644 / CIP 104116 / JCM 14847 / LMG 12228 / 1C / PRS 101 / PAO1)).